We begin with the raw amino-acid sequence, 390 residues long: Phosphoglycerate kinase (390 aa).

Residues 19–21, arginine 34, 57–60, arginine 115, and arginine 148 contribute to the substrate site; these read DYN and HLGR. ATP contacts are provided by residues lysine 198, glycine 289, glutamate 320, and 347 to 350; that span reads GGDS.

It belongs to the phosphoglycerate kinase family. In terms of assembly, monomer.

The protein localises to the cytoplasm. It carries out the reaction (2R)-3-phosphoglycerate + ATP = (2R)-3-phospho-glyceroyl phosphate + ADP. Its pathway is carbohydrate degradation; glycolysis; pyruvate from D-glyceraldehyde 3-phosphate: step 2/5. The protein is Phosphoglycerate kinase of Thermus thermophilus (strain ATCC BAA-163 / DSM 7039 / HB27).